Consider the following 240-residue polypeptide: Purine nucleoside phosphorylase RP494 (240 aa).

The Zn(2+) site is built by histidine 60, cysteine 96, and histidine 113.

This sequence belongs to the purine nucleoside phosphorylase YfiH/LACC1 family. In terms of assembly, homodimer. It depends on Cu(2+) as a cofactor. Zn(2+) serves as cofactor.

It catalyses the reaction adenosine + phosphate = alpha-D-ribose 1-phosphate + adenine. The catalysed reaction is S-methyl-5'-thioadenosine + phosphate = 5-(methylsulfanyl)-alpha-D-ribose 1-phosphate + adenine. The enzyme catalyses inosine + phosphate = alpha-D-ribose 1-phosphate + hypoxanthine. It carries out the reaction adenosine + H2O + H(+) = inosine + NH4(+). Its function is as follows. Purine nucleoside enzyme that catalyzes the phosphorolysis of adenosine and inosine nucleosides, yielding D-ribose 1-phosphate and the respective free bases, adenine and hypoxanthine. Also catalyzes the phosphorolysis of S-methyl-5'-thioadenosine into adenine and S-methyl-5-thio-alpha-D-ribose 1-phosphate. Also has adenosine deaminase activity. This chain is Purine nucleoside phosphorylase RP494, found in Rickettsia prowazekii (strain Madrid E).